A 405-amino-acid chain; its full sequence is MSVCESKAVVQQQLQQHLQQQAAAAVVAVAQQQQAQAQAQAQAQAQQQQQAPQVVVPMTPQHLTPQQQQQSTQSIADYLAQLLKDRKQLAAFPNVFTHVERLLDEEIARVRASLFQINGVKKEPLTLPEPEGSVVTMNEKVYVPVREHPDFNFVGRILGPRGMTAKQLEQETGCKIMVRGKGSMRDKKKEDANRGKPNWEHLSDDLHVLITVEDTENRATVKLAQAVAEVQKLLVPQAEGEDELKKRQLMELAIINGTYRDTTAKSVAVCDEEWRRLVAASDSRLLTSTGLPGLAAQIRAPAAAPLGAPLILNPRMTVPTTAASILSAQAAPTAAFDQTGHGMIFAPYDYANYAALAGNPLLTEYADHSVGAIKQQRRLATNREHPYQRATVGVPAKPAGFIEIQ.

Residues 142-210 (YVPVREHPDF…HLSDDLHVLI (69 aa)) enclose the KH domain.

As to quaternary structure, homodimer. Interacts with Sxl; promoting nuclear retention of msl-2 transcripts. As to expression, during embryogenesis, expression is seen in mesodermal precursors of somatic, visceral and pharyngeal muscle. Later in embryogenesis, expression is restricted to heart and muscle attachment sites of the epidermis. During onset of metamorphosis, expression is seen in muscle and muscle attachment cells.

Its subcellular location is the nucleus. Functionally, RNA-binding protein involved in muscle development and dosage compensation. Vital role in steroid regulation of muscle development and to control heart rate. Required during embryogenesis, in late stages of somatic muscle development, for myotube migration and during metamorphosis for muscle reorganization. Required for integrin-mediated cell-adhesion in wing blade. Together with Sxl, acts as an inhibitor of dosage compensation in females by preventing production of msl-2 protein, an essential component of the MSL complex. Specifically binds to the 5'-UTR of msl-2 transcripts and cooperates with Sxl to promote nuclear retention of msl-2 mRNAs. This is Protein held out wings (how) from Drosophila melanogaster (Fruit fly).